We begin with the raw amino-acid sequence, 1085 residues long: Voltage-dependent calcium channel subunit alpha-2/delta-3 (1085 aa).

Positions 1-33 (MAGPGSLCCASRGASALLATALLYAALGDVVRS) are cleaved as a signal peptide. Residues 34–1062 (EQQIPLSVVK…HPEENARECG (1029 aa)) are Extracellular-facing. Asn-166 carries an N-linked (GlcNAc...) asparagine glycan. A VWFA domain is found at 256-438 (DVVILVDVSG…ENVMEYLHVL (183 aa)). A divalent metal cation contacts are provided by Asp-262, Ser-264, and Ser-266. Residues 262–266 (DVSGS) carry the MIDAS-like motif motif. N-linked (GlcNAc...) asparagine glycosylation occurs at Asn-309. Cys-412 and Cys-1049 are disulfide-bonded. Residues 452–543 (WTEAYIDSTL…RPLYEEGKKR (92 aa)) enclose the Cache domain. N-linked (GlcNAc...) asparagine glycans are attached at residues Asn-547 and Asn-626. The residue at position 918 (Tyr-918) is a Phosphotyrosine. The chain crosses the membrane as a helical span at residues 1063–1083 (GASSLQAQVALLLLPLVSSLF). At 1084–1085 (SR) the chain is on the cytoplasmic side.

This sequence belongs to the calcium channel subunit alpha-2/delta family. In terms of assembly, dimer formed of alpha-2-2 and delta-2 chains; disulfide-linked. Voltage-dependent calcium channels are multisubunit complexes, consisting of alpha-1 (CACNA1), alpha-2 (CACNA2D), beta (CACNB) and delta (CACNA2D) subunits in a 1:1:1:1 ratio. In terms of processing, N-glycosylated. May be proteolytically processed into subunits alpha-2-3 and delta-3 that are disulfide-linked. It is however unclear whether such cleavage really takes place in vivo and has a functional role. In terms of tissue distribution, in heart, it is expressed in atrium but not in ventricle.

The protein localises to the membrane. Its function is as follows. The alpha-2/delta subunit of voltage-dependent calcium channels regulates calcium current density and activation/inactivation kinetics of the calcium channel. Acts as a regulatory subunit for P/Q-type calcium channel (CACNA1A), N-type (CACNA1B), L-type (CACNA1C OR CACNA1D) but not T-type (CACNA1G). This chain is Voltage-dependent calcium channel subunit alpha-2/delta-3 (Cacna2d3), found in Rattus norvegicus (Rat).